The following is a 91-amino-acid chain: Probable Fe(2+)-trafficking protein (91 aa).

This sequence belongs to the Fe(2+)-trafficking protein family. As to quaternary structure, monomer.

Could be a mediator in iron transactions between iron acquisition and iron-requiring processes, such as synthesis and/or repair of Fe-S clusters in biosynthetic enzymes. In Escherichia coli O6:H1 (strain CFT073 / ATCC 700928 / UPEC), this protein is Probable Fe(2+)-trafficking protein.